A 721-amino-acid polypeptide reads, in one-letter code: Kinesin-like protein KIF2C (721 aa).

The tract at residues 1–250 (MESLHARLFP…CSPLTVTDPI (250 aa)) is globular. Phosphoserine occurs at positions 3 and 19. Phosphoserine; by AURKB is present on Ser92. Positions 95–98 (SKIP) match the Microtubule tip localization signal motif. Phosphoserine is present on residues Ser106, Ser108, Ser112, Ser162, Ser171, Ser183, and Ser188. Positions 164-188 (EAEEQAHSTRSTSSANPGNSVRRKS) are disordered. Positions 171–182 (STRSTSSANPGN) are enriched in polar residues. The interval 203–234 (EKRAQNSELRIKRAQEYDSSFPNWEFARMIKE) is negative regulator of microtubule-binding. Positions 254–584 (RICVCVRKRP…LRYADRVKEL (331 aa)) constitute a Kinesin motor domain. ATP contacts are provided by residues Arg260 and 344-351 (GQTGSGKT). 2 positions are modified to phosphoserine: Ser515 and Ser626. Positions 614–652 (GNEEEELSSQMSSFNEAMTQIRELEERALEELREIIQQG) form a coiled coil.

Belongs to the TRAFAC class myosin-kinesin ATPase superfamily. Kinesin family. MCAK/KIF2 subfamily. Interacts with CENPH. Interacts with MTUS2/TIP150; the interaction is direct. Interacts with MAPRE1; the interaction is direct, regulated by phosphorylation and is probably required for targeting to growing microtubule plus ends. Interacts with KIF18B at microtubule tips; this interaction increases the affinity of both partners for microtubule plus ends and is required for robust microtubule depolymerization. Phosphorylation by AURKA or AURKB strongly reduces KIF18B-binding. In terms of processing, phosphorylation by AURKB, regulates association with centromeres and kinetochores and the microtubule depolymerization activity. Post-translationally, ubiquitinated.

The protein localises to the cytoplasm. It localises to the cytoskeleton. Its subcellular location is the nucleus. It is found in the chromosome. The protein resides in the centromere. The protein localises to the kinetochore. Its function is as follows. In complex with KIF18B, constitutes the major microtubule plus-end depolymerizing activity in mitotic cells. Regulates the turnover of microtubules at the kinetochore and functions in chromosome segregation during mitosis. Plays a role in chromosome congression and is required for the lateral to end-on conversion of the chromosome-microtubule attachment. This chain is Kinesin-like protein KIF2C (Kif2c), found in Mus musculus (Mouse).